The chain runs to 315 residues: Aspartate carbamoyltransferase catalytic subunit (315 aa).

The carbamoyl phosphate site is built by arginine 65 and threonine 66. Lysine 93 serves as a coordination point for L-aspartate. Carbamoyl phosphate is bound by residues arginine 115, histidine 145, and glutamine 148. L-aspartate-binding residues include arginine 179 and arginine 234. Glycine 275 and proline 276 together coordinate carbamoyl phosphate.

This sequence belongs to the aspartate/ornithine carbamoyltransferase superfamily. ATCase family. Heterododecamer (2C3:3R2) of six catalytic PyrB chains organized as two trimers (C3), and six regulatory PyrI chains organized as three dimers (R2).

It catalyses the reaction carbamoyl phosphate + L-aspartate = N-carbamoyl-L-aspartate + phosphate + H(+). Its pathway is pyrimidine metabolism; UMP biosynthesis via de novo pathway; (S)-dihydroorotate from bicarbonate: step 2/3. Catalyzes the condensation of carbamoyl phosphate and aspartate to form carbamoyl aspartate and inorganic phosphate, the committed step in the de novo pyrimidine nucleotide biosynthesis pathway. In Xanthomonas oryzae pv. oryzae (strain MAFF 311018), this protein is Aspartate carbamoyltransferase catalytic subunit.